The primary structure comprises 638 residues: Growth hormone receptor (638 aa).

Positions 1-18 (MDLWQLLLTLALAGSSDA) are cleaved as a signal peptide. Over 19-264 (FSGSEPTAAI…NQFTCEEDFY (246 aa)) the chain is Extracellular. N-linked (GlcNAc...) asparagine glycosylation occurs at Asn46. Disulfide bonds link Cys56-Cys66 and Cys101-Cys112. Asn115 carries an N-linked (GlcNAc...) asparagine glycan. Cys126 and Cys140 form a disulfide bridge. Positions 151-254 (PPIALNWTLL…EVLYVTLPQM (104 aa)) constitute a Fibronectin type-III domain. N-linked (GlcNAc...) asparagine glycosylation is found at Asn156, Asn161, and Asn200. The WSXWS motif signature appears at 240 to 244 (YGEFS). The chain crosses the membrane as a helical span at residues 265 to 288 (FPWLLIIIFGIFGLTVMLFVFLFS). The Cytoplasmic portion of the chain corresponds to 289–638 (KQQRIKMLIL…STDQLNKIMP (350 aa)). Residues 294–379 (KMLILPPVPV…HQKSHSNLGV (86 aa)) are required for JAK2 binding. The short motif at 297-305 (ILPPVPVPK) is the Box 1 motif element. The short motif at 340 to 349 (DSWVEFIELD) is the UbE motif element. Position 341 is a phosphoserine (Ser341). Residues 353 to 388 (PDEKNEGSDTDRLLSSDHQKSHSNLGVKDGDSGRTS) are disordered. A compositionally biased stretch (basic and acidic residues) spans 356–372 (KNEGSDTDRLLSSDHQK). 2 positions are modified to phosphotyrosine: Tyr487 and Tyr595.

This sequence belongs to the type I cytokine receptor family. Type 1 subfamily. On growth hormone (GH) binding, forms homodimers and binds JAK2 via a box 1-containing domain. Post-translationally, the soluble form (GHBP) is produced by phorbol ester-promoted proteolytic cleavage at the cell surface (shedding) by ADAM17/TACE. Shedding is inhibited by growth hormone (GH) binding to the receptor probably due to a conformational change in GHR rendering the receptor inaccessible to ADAM17. On GH binding, phosphorylated on tyrosine residues in the cytoplasmic domain by JAK2. In terms of processing, ubiquitinated by the ECS(SOCS2) complex following ligand-binding and phosphorylation by JAK2, leading to its degradation by the proteasome. Regulation by the ECS(SOCS2) complex acts as a negative feedback loop of growth hormone receptor signaling. Ubiquitination is not sufficient for GHR internalization.

The protein resides in the cell membrane. Its subcellular location is the secreted. In terms of biological role, receptor for pituitary gland growth hormone (GH1) involved in regulating postnatal body growth. On ligand binding, couples to the JAK2/STAT5 pathway. The soluble form (GHBP) acts as a reservoir of growth hormone in plasma and may be a modulator/inhibitor of GH signaling. The polypeptide is Growth hormone receptor (GHR) (Papio anubis (Olive baboon)).